Reading from the N-terminus, the 95-residue chain is CRISPR-associated endoribonuclease Cas2 1 (95 aa).

A Mg(2+)-binding site is contributed by Asp11.

The protein belongs to the CRISPR-associated endoribonuclease Cas2 protein family. In terms of assembly, homodimer, forms a heterotetramer with a Cas1 homodimer. It depends on Mg(2+) as a cofactor.

Its function is as follows. CRISPR (clustered regularly interspaced short palindromic repeat), is an adaptive immune system that provides protection against mobile genetic elements (viruses, transposable elements and conjugative plasmids). CRISPR clusters contain sequences complementary to antecedent mobile elements and target invading nucleic acids. CRISPR clusters are transcribed and processed into CRISPR RNA (crRNA). Functions as a ssRNA-specific endoribonuclease. Involved in the integration of spacer DNA into the CRISPR cassette. The chain is CRISPR-associated endoribonuclease Cas2 1 from Methanospirillum hungatei JF-1 (strain ATCC 27890 / DSM 864 / NBRC 100397 / JF-1).